A 203-amino-acid polypeptide reads, in one-letter code: Translation initiation factor IF-3 (203 aa).

Residues 172 to 182 (EAPKNEKKTKE) show a composition bias toward basic and acidic residues. Residues 172–203 (EAPKNEKKTKENNPPFNRINLMKGENHAKNED) form a disordered region.

Belongs to the IF-3 family. Monomer.

It localises to the cytoplasm. Its function is as follows. IF-3 binds to the 30S ribosomal subunit and shifts the equilibrium between 70S ribosomes and their 50S and 30S subunits in favor of the free subunits, thus enhancing the availability of 30S subunits on which protein synthesis initiation begins. The chain is Translation initiation factor IF-3 from Helicobacter pylori (strain ATCC 700392 / 26695) (Campylobacter pylori).